Consider the following 496-residue polypeptide: Lysine--tRNA ligase (496 aa).

2 residues coordinate Mg(2+): Glu409 and Glu416.

The protein belongs to the class-II aminoacyl-tRNA synthetase family. As to quaternary structure, homodimer. The cofactor is Mg(2+).

It localises to the cytoplasm. The catalysed reaction is tRNA(Lys) + L-lysine + ATP = L-lysyl-tRNA(Lys) + AMP + diphosphate. This chain is Lysine--tRNA ligase, found in Streptococcus agalactiae serotype III (strain NEM316).